The primary structure comprises 1448 residues: ABC transporter G family member 9 (1448 aa).

Polar residues predominate over residues 16–28 (EGGSNLNINTPSG). The tract at residues 16–41 (EGGSNLNINTPSGMSDGDFNSGANSP) is disordered. The ABC transporter 1 domain occupies 136 to 385 (LFKPSTWKIE…FLDLGFDCEP (250 aa)). The 228-residue stretch at 490–717 (WGDKFSLVSR…APYDNSVRVC (228 aa)) folds into the ABC transmembrane type-2 1 domain. 7 helical membrane passes run 494 to 514 (FSLV…GSVF), 530 to 550 (AIFA…FATF), 579 to 599 (IPLT…MFGL), 604 to 624 (GKFF…TNMF), 634 to 654 (LYVS…YCGY), 663 to 683 (PWFG…ALMA), and 748 to 768 (LNIF…MVAV). The ABC transporter 2 domain occupies 822-1066 (FTWENIKYTV…LTSYFERQGV (245 aa)). Residue 858–865 (GSSGAGKT) participates in ATP binding. Transmembrane regions (helical) follow at residues 1157-1177 (FYAY…GFTF), 1191-1211 (IFFI…VMVQ), 1233-1253 (FAIS…SVFF), 1272-1292 (FYFW…GGAI), 1299-1319 (MFLA…FCGV), and 1422-1442 (IAIL…FVYL). The region spanning 1157 to 1389 (FYAYGSILQA…VPATGYVTNT (233 aa)) is the ABC transmembrane type-2 2 domain.

This sequence belongs to the ABC transporter superfamily. ABCG family. PDR (TC 3.A.1.205) subfamily.

It is found in the membrane. The sequence is that of ABC transporter G family member 9 (abcG9) from Dictyostelium discoideum (Social amoeba).